The following is a 476-amino-acid chain: Argininosuccinate lyase (476 aa).

The protein belongs to the lyase 1 family. Argininosuccinate lyase subfamily.

Its subcellular location is the cytoplasm. It carries out the reaction 2-(N(omega)-L-arginino)succinate = fumarate + L-arginine. It participates in amino-acid biosynthesis; L-arginine biosynthesis; L-arginine from L-ornithine and carbamoyl phosphate: step 3/3. The protein is Argininosuccinate lyase of Acaryochloris marina (strain MBIC 11017).